Here is a 218-residue protein sequence, read N- to C-terminus: Pyridoxine/pyridoxamine 5'-phosphate oxidase (218 aa).

Substrate-binding positions include 14 to 17 (RREY) and Lys-72. Residues 67–72 (RIVLLK), 82–83 (YT), Arg-88, Lys-89, and Gln-111 each bind FMN. 3 residues coordinate substrate: Tyr-129, Arg-133, and Ser-137. Residues 146–147 (QS) and Trp-191 contribute to the FMN site. 197–199 (RLH) serves as a coordination point for substrate. Arg-201 contributes to the FMN binding site.

Belongs to the pyridoxamine 5'-phosphate oxidase family. Homodimer. It depends on FMN as a cofactor.

The enzyme catalyses pyridoxamine 5'-phosphate + O2 + H2O = pyridoxal 5'-phosphate + H2O2 + NH4(+). The catalysed reaction is pyridoxine 5'-phosphate + O2 = pyridoxal 5'-phosphate + H2O2. It participates in cofactor metabolism; pyridoxal 5'-phosphate salvage; pyridoxal 5'-phosphate from pyridoxamine 5'-phosphate: step 1/1. The protein operates within cofactor metabolism; pyridoxal 5'-phosphate salvage; pyridoxal 5'-phosphate from pyridoxine 5'-phosphate: step 1/1. Catalyzes the oxidation of either pyridoxine 5'-phosphate (PNP) or pyridoxamine 5'-phosphate (PMP) into pyridoxal 5'-phosphate (PLP). The chain is Pyridoxine/pyridoxamine 5'-phosphate oxidase from Cronobacter sakazakii (strain ATCC BAA-894) (Enterobacter sakazakii).